Here is a 103-residue protein sequence, read N- to C-terminus: G0/G1 switch protein 2 (103 aa).

In terms of assembly, directly interacts with BCL2; this interaction prevents the formation of the anti-apoptotic BAX-BCL2 complex.

It is found in the mitochondrion. Functionally, promotes apoptosis by binding to BCL2, hence preventing the formation of protective BCL2-BAX heterodimers. The protein is G0/G1 switch protein 2 (G0s2) of Mus musculus (Mouse).